The sequence spans 70 residues: U2-agatoxin-Ao1j (70 aa).

Residues 1–20 (MRAIISLLLISAMVFSMIAA) form the signal peptide. Residues 21-34 (VPEEEGLQLSEDER) constitute a propeptide that is removed on maturation. Cystine bridges form between cysteine 37–cysteine 53, cysteine 44–cysteine 58, and cysteine 52–cysteine 68. At leucine 69 the chain carries Leucine amide.

The protein belongs to the neurotoxin 01 (U2-agtx) family. As to expression, expressed by the venom gland.

Its subcellular location is the secreted. Functionally, insect active toxin causing rapid but reversible paralysis in crickets. No activity shown in mammals. Does not show effect on mammalian voltage-gated calcium channels. The protein is U2-agatoxin-Ao1j of Agelena orientalis (Funnel-web spider).